Here is a 328-residue protein sequence, read N- to C-terminus: Ribosomal RNA small subunit methyltransferase C (328 aa).

The protein belongs to the methyltransferase superfamily. RsmC family. As to quaternary structure, monomer.

It is found in the cytoplasm. It catalyses the reaction guanosine(1207) in 16S rRNA + S-adenosyl-L-methionine = N(2)-methylguanosine(1207) in 16S rRNA + S-adenosyl-L-homocysteine + H(+). In terms of biological role, specifically methylates the guanine in position 1207 of 16S rRNA in the 30S particle. This Pasteurella multocida (strain Pm70) protein is Ribosomal RNA small subunit methyltransferase C.